Consider the following 210-residue polypeptide: ATP-dependent Clp protease proteolytic subunit (210 aa).

Ser106 acts as the Nucleophile in catalysis. His131 is an active-site residue.

The protein belongs to the peptidase S14 family. Fourteen ClpP subunits assemble into 2 heptameric rings which stack back to back to give a disk-like structure with a central cavity, resembling the structure of eukaryotic proteasomes.

Its subcellular location is the cytoplasm. It carries out the reaction Hydrolysis of proteins to small peptides in the presence of ATP and magnesium. alpha-casein is the usual test substrate. In the absence of ATP, only oligopeptides shorter than five residues are hydrolyzed (such as succinyl-Leu-Tyr-|-NHMec, and Leu-Tyr-Leu-|-Tyr-Trp, in which cleavage of the -Tyr-|-Leu- and -Tyr-|-Trp bonds also occurs).. Cleaves peptides in various proteins in a process that requires ATP hydrolysis. Has a chymotrypsin-like activity. Plays a major role in the degradation of misfolded proteins. The chain is ATP-dependent Clp protease proteolytic subunit from Bradyrhizobium sp. (strain BTAi1 / ATCC BAA-1182).